Reading from the N-terminus, the 112-residue chain is Putative galactitol utilization operon repressor (112 aa).

The HTH deoR-type domain maps to 5–60 (SFERRNKIIQLVNEQGTVLVQDLAGVFAASEATIRADLRFLEQKGVVTRFHGGAAK). The segment at residues 22–41 (VLVQDLAGVFAASEATIRAD) is a DNA-binding region (H-T-H motif).

Repressor of the gat operon for galacticol transport and metabolism. In K12 strains the operon is constitutively expressed because this gene is inactive. This chain is Putative galactitol utilization operon repressor (gatR), found in Escherichia coli (strain K12).